We begin with the raw amino-acid sequence, 490 residues long: Doublesex- and mab-3-related transcription factor A1 (490 aa).

A compositionally biased stretch (basic and acidic residues) spans 1 to 13 (MERLPHGRRDRSG). The disordered stretch occupies residues 1-31 (MERLPHGRRDRSGGCRPHLAPGRAAAPASAA). Positions 20–31 (APGRAAAPASAA) are enriched in low complexity. The DM DNA-binding region spans 86–133 (CARCRNHGVVSALKGHKRFCRWRDCACAKCTLIAERQRVMAAQVALRR). Disordered stretches follow at residues 152–171 (GSSG…ESPQ) and 207–289 (DRKQ…DLES). Residues 207–216 (DRKQEPKQRN) are compositionally biased toward basic and acidic residues. Composition is skewed to polar residues over residues 217 to 242 (CESC…SKGN) and 269 to 289 (PTDQ…DLES). In terms of domain architecture, DMA spans 314–349 (RDPLGILTRIFPGYKHSRLEGILQFCKGDVVQAIEQ).

This sequence belongs to the DMRT family. Widely expressed, with highest levels in ovary, testis, epididymis, preputial gland, vomeronasal organ, liver, salivary glands and heart. Also expressed throughout the brain with highest levels in the olfactory bulbs and medulla. Detected at similar levels in gonads of both sexes.

It localises to the nucleus. This Mus musculus (Mouse) protein is Doublesex- and mab-3-related transcription factor A1 (Dmrta1).